The chain runs to 525 residues: Ankyrin repeat and SOCS box protein 3 (525 aa).

ANK repeat units lie at residues 9-38 (DTCS…SIDV), 42-71 (RGWM…SENY), 78-107 (EGFC…DPNA), 111-140 (EETT…NVNG), 145-174 (CGWN…NKEC), 178-207 (FGIT…DVNC), 211-240 (DKAT…DPDL), 246-275 (NWQL…RVCD), 279-308 (NKVS…SPDA), 315-346 (GFSS…QLNE), and 348-373 (HLAY…PSTP). Residues 441 to 505 (MLSARASNSS…HDYLLYAEVL (65 aa)) enclose the SOCS box domain.

This sequence belongs to the ankyrin SOCS box (ASB) family. As to quaternary structure, interacts with ELOB and TNFRSF1B.

The protein operates within protein modification; protein ubiquitination. Probable substrate-recognition component of a SCF-like ECS (Elongin-Cullin-SOCS-box protein) E3 ubiquitin-protein ligase complex which mediates the ubiquitination and subsequent proteasomal degradation of target proteins. Recognizes TNFRSF1B. The polypeptide is Ankyrin repeat and SOCS box protein 3 (ASB3) (Bos taurus (Bovine)).